The sequence spans 269 residues: GTP cyclohydrolase FolE2 2 (269 aa).

Belongs to the GTP cyclohydrolase IV family.

It carries out the reaction GTP + H2O = 7,8-dihydroneopterin 3'-triphosphate + formate + H(+). It participates in cofactor biosynthesis; 7,8-dihydroneopterin triphosphate biosynthesis; 7,8-dihydroneopterin triphosphate from GTP: step 1/1. Functionally, converts GTP to 7,8-dihydroneopterin triphosphate. The sequence is that of GTP cyclohydrolase FolE2 2 from Burkholderia lata (strain ATCC 17760 / DSM 23089 / LMG 22485 / NCIMB 9086 / R18194 / 383).